Reading from the N-terminus, the 293-residue chain is Homoserine kinase (293 aa).

83–93 (PITRGMGSSSA) serves as a coordination point for ATP.

The protein belongs to the GHMP kinase family. Homoserine kinase subfamily.

The protein localises to the cytoplasm. The catalysed reaction is L-homoserine + ATP = O-phospho-L-homoserine + ADP + H(+). The protein operates within amino-acid biosynthesis; L-threonine biosynthesis; L-threonine from L-aspartate: step 4/5. Its function is as follows. Catalyzes the ATP-dependent phosphorylation of L-homoserine to L-homoserine phosphate. The polypeptide is Homoserine kinase (Helicobacter pylori (strain ATCC 700392 / 26695) (Campylobacter pylori)).